The sequence spans 193 residues: MCVFFCVCIFLCVYFFVCIFLCVFFCVCIFLCVFFCVYFFVCVFFCVCFFVCVFFVCVYAFAHVAVCSVRPRRHVCACSRAYLHHRNGSGVYKKVIRPAGRSAHPPVGRFYTRPLFSLSRATCGPSSGTSAPRPRWRSLTLGGAHGPRGRSLFPPASPRLSLCGSAFCLSFSLARAIVFSLSPGSGARLHLRL.

3 helical membrane-spanning segments follow: residues 15-35 (FFVC…CVFF), 36-56 (CVYF…VFFV), and 160-180 (LSLC…IVFS).

It localises to the host membrane. This Homo sapiens (Human) protein is Protein B4 (B4).